The primary structure comprises 230 residues: ATP synthase subunit a (230 aa).

Transmembrane regions (helical) follow at residues 17–37 (LPITQSVLTTWFIMISLFIMA), 78–98 (IFPFVATLWIFILVSNLIGVI), 107–127 (DLSVTASLAIMTFLSVHWFGI), 165–187 (LFGNIMSLQLTALIVLMIAGFLV), and 198–218 (EAIIQAYIFGMLALIYIAGGI).

Belongs to the ATPase A chain family. As to quaternary structure, F-type ATPases have 2 components, CF(1) - the catalytic core - and CF(0) - the membrane proton channel. CF(1) has five subunits: alpha(3), beta(3), gamma(1), delta(1), epsilon(1). CF(0) has three main subunits: a(1), b(2) and c(9-12). The alpha and beta chains form an alternating ring which encloses part of the gamma chain. CF(1) is attached to CF(0) by a central stalk formed by the gamma and epsilon chains, while a peripheral stalk is formed by the delta and b chains.

Its subcellular location is the cell inner membrane. In terms of biological role, key component of the proton channel; it plays a direct role in the translocation of protons across the membrane. This is ATP synthase subunit a from Legionella pneumophila subsp. pneumophila (strain Philadelphia 1 / ATCC 33152 / DSM 7513).